Reading from the N-terminus, the 298-residue chain is Isochorismatase domain-containing protein 1 (298 aa).

At Tyr-160 the chain carries Phosphotyrosine. Lys-279 carries the N6-succinyllysine modification.

Belongs to the isochorismatase family.

In Homo sapiens (Human), this protein is Isochorismatase domain-containing protein 1 (ISOC1).